The chain runs to 203 residues: Guanylate kinase (203 aa).

The Guanylate kinase-like domain occupies 5-183 (GVLYILSAPS…AVEELKSVII (179 aa)). Residue 12 to 19 (APSGAGKT) participates in ATP binding.

This sequence belongs to the guanylate kinase family.

It is found in the cytoplasm. It catalyses the reaction GMP + ATP = GDP + ADP. In terms of biological role, essential for recycling GMP and indirectly, cGMP. The sequence is that of Guanylate kinase from Geobacter sulfurreducens (strain ATCC 51573 / DSM 12127 / PCA).